Here is a 239-residue protein sequence, read N- to C-terminus: Orotidine 5'-phosphate decarboxylase (239 aa).

Substrate contacts are provided by residues Asp15, Lys37, 64–73, Thr126, Arg187, Gln196, Gly216, and Arg217; that span reads DLKYHDIPNT. Residue Lys66 is the Proton donor of the active site.

The protein belongs to the OMP decarboxylase family. Type 1 subfamily. Homodimer.

It catalyses the reaction orotidine 5'-phosphate + H(+) = UMP + CO2. The protein operates within pyrimidine metabolism; UMP biosynthesis via de novo pathway; UMP from orotate: step 2/2. Its function is as follows. Catalyzes the decarboxylation of orotidine 5'-monophosphate (OMP) to uridine 5'-monophosphate (UMP). In Geotalea daltonii (strain DSM 22248 / JCM 15807 / FRC-32) (Geobacter daltonii), this protein is Orotidine 5'-phosphate decarboxylase.